Here is a 146-residue protein sequence, read N- to C-terminus: Putative inactive cytochrome P450 2G1 (146 aa).

Cys-91 is a heme binding site.

The protein belongs to the cytochrome P450 family. The cofactor is heme.

The chain is Putative inactive cytochrome P450 2G1 (CYP2G1P) from Homo sapiens (Human).